Reading from the N-terminus, the 736-residue chain is MPVPGWGSYPPFDRDETSAITYQSKLRGSVTVYDPYSALEVPSNDSEETKAFILEQNKFSRAYLDANPDRQTWLETLKKSWHYRRFTTPTRESDDHFYFLYNDGLLAQSPVYRVKVDDVDSILTESGPGGELFFDPNLLSLDGVATLTGTAMSPCGKYWAYAISEHGNDWMTIYVRKTSSPHHPSQERGKDPGRMDDVIQHCRIFFVSWTDDSKGFFYSKWPPDENQGNGNAPGVDCKIYYHRIAVFLSEDPEHPGWFWNVEVSPSGQYALLLGTRDASLNQLVKLADLHTSDIETGIQWTTLHDSWQARFSIIGNDNSLIYFRTNLEAENHRVAAFNVHHPQAGFTTLVPGSLDSVLLDAKLYGINKLVLVYQHLAKHEIYLHDIETGRRLRQIFTDLAGKMTISGRRADHEMFVLYSDFISPGTLYRQLLNRYKFDKDTDKGLLFRTIKVDALNLDDFVTESEFYPSKDGTLVHMFITHPKDVFTDGTAPVLMYGYGGFGAPMFPNFSISNLLFCNIYRGIGGSEFGESWHREGMLEKKQNVFDDFRAAAEWLVTNKYARKGGVAIRGGSNGGIMTTACSNQAPELYGCVITIAGLQDMLRYTKFTFGDLLRSEYGNPENPEDFDYIYKYSPYHNIPLKEVTMPPMLFLQSDYDDRVSPLHTYKHVAALQHRFPKGPNPIILRIDLDSGHYAGKSTMRLIEETADEYSFIGKSLGLTMHLPNNSNYSNRWCVLG.

Catalysis depends on charge relay system residues Ser-572, Asp-656, and His-692.

It belongs to the peptidase S9A family. As to quaternary structure, monomer.

It carries out the reaction Hydrolysis of Pro-|-Xaa &gt;&gt; Ala-|-Xaa in oligopeptides.. It functions in the pathway mycotoxin biosynthesis. Prolyl oligopeptidase; part of the gene cluster that mediates the biosynthesis of dendrothelin A, a highly methylated cyclic dodecapeptide showing slight nematodicidal activity. Excises and catalyzes the macrocyclization of the methylated core peptide of dbiMA to yield dendrothelin A. DbiP works in a two-step fashion with an initial cleavage at the N-terminus, followed by a second cleavage at the C-terminus of the core peptide. According to this mechanism, the free N-terminus of the core peptide, generated by the first cleavage, attacks the covalent intermediate of the second cleavage, which results in macrocyclization of the core peptide. The polypeptide is Prolyl oligopeptidase dbiP (Dendrothele bispora (strain CBS 962.96)).